A 491-amino-acid chain; its full sequence is Monodehydroascorbate reductase 5, chlorplastic (491 aa).

Residues 1–42 (MASTAAAASSQGCISWALRQRGLGGGGARAVPVLPRRRFCVS) constitute a chloroplast transit peptide. FAD is bound by residues 61–64 (GGNA), Glu-88, Arg-95, Lys-100, and 194–195 (RD). NAD(+) contacts are provided by residues 217–223 (GGYIGME), Glu-241, Arg-247, and Gly-306. Position 219–223 (219–223 (YIGME)) interacts with NADP(+). NADP(+) is bound by residues Arg-247 and Gly-306. An FAD-binding site is contributed by Asp-344. 360 to 361 (EH) lines the NAD(+) pocket. 360-361 (EH) lines the NADP(+) pocket. Val-362 lines the FAD pocket. Residue Arg-366 coordinates L-ascorbate. Tyr-391 lines the FAD pocket. Tyr-391 contributes to the NAD(+) binding site. Residue Tyr-391 participates in NADP(+) binding. Position 393 (Arg-393) interacts with L-ascorbate.

Belongs to the FAD-dependent oxidoreductase family. The cofactor is FAD.

The protein resides in the plastid. It is found in the chloroplast. It catalyses the reaction 2 monodehydro-L-ascorbate radical + NADH + H(+) = 2 L-ascorbate + NAD(+). In terms of biological role, catalyzes the conversion of monodehydroascorbate to ascorbate, oxidizing NADH in the process. Ascorbate is a major antioxidant against reactive oxygen species (ROS) and nitric oxide (NO). In Oryza sativa subsp. japonica (Rice), this protein is Monodehydroascorbate reductase 5, chlorplastic.